A 462-amino-acid chain; its full sequence is Major capsid protein (462 aa).

The protein belongs to the NCLDV major capsid protein family. In terms of assembly, homotrimer.

The protein localises to the virion. Major capsid protein that self assembles to form an icosahedral capsid. Represents around 50% of the total virion protein mass. In Costelytra zealandica (CzIV), this protein is Major capsid protein (MCP).